Consider the following 458-residue polypeptide: tRNA modification GTPase MnmE (458 aa).

(6S)-5-formyl-5,6,7,8-tetrahydrofolate-binding residues include Arg22, Glu84, and Arg123. In terms of domain architecture, TrmE-type G spans 220-379 (GISTAIIGRP…LEKAIADLFF (160 aa)). Residue Asn230 coordinates K(+). GTP contacts are provided by residues 230 to 235 (NVGKSS), 249 to 255 (TDIAGTT), and 274 to 277 (DTAG). Ser234 lines the Mg(2+) pocket. K(+) contacts are provided by Thr249, Ile251, and Thr254. Thr255 is a Mg(2+) binding site. Residue Lys458 participates in (6S)-5-formyl-5,6,7,8-tetrahydrofolate binding.

The protein belongs to the TRAFAC class TrmE-Era-EngA-EngB-Septin-like GTPase superfamily. TrmE GTPase family. Homodimer. Heterotetramer of two MnmE and two MnmG subunits. K(+) is required as a cofactor.

The protein localises to the cytoplasm. In terms of biological role, exhibits a very high intrinsic GTPase hydrolysis rate. Involved in the addition of a carboxymethylaminomethyl (cmnm) group at the wobble position (U34) of certain tRNAs, forming tRNA-cmnm(5)s(2)U34. The chain is tRNA modification GTPase MnmE from Bacillus mycoides (strain KBAB4) (Bacillus weihenstephanensis).